The sequence spans 221 residues: Ras-related protein RABA5a (221 aa).

Residue 21–28 (GDSAVGKS) participates in GTP binding. Residues 43–51 (SKSTIGVEF) carry the Effector region motif. GTP is bound by residues 69–73 (DTAGQ), 127–130 (NKSD), and 157–158 (SA). Residues C218 and C219 are each lipidated (S-geranylgeranyl cysteine).

The protein belongs to the small GTPase superfamily. Rab family.

The protein localises to the cell membrane. Its function is as follows. Intracellular vesicle trafficking and protein transport. This chain is Ras-related protein RABA5a (RABA5A), found in Arabidopsis thaliana (Mouse-ear cress).